The primary structure comprises 234 residues: Ribonuclease HII (234 aa).

The RNase H type-2 domain maps to 16–207; sequence ALVAGVDEAG…VRRMLTPKAI (192 aa). Positions 22, 23, and 115 each coordinate a divalent metal cation.

Belongs to the RNase HII family. It depends on Mn(2+) as a cofactor. The cofactor is Mg(2+).

It localises to the cytoplasm. It catalyses the reaction Endonucleolytic cleavage to 5'-phosphomonoester.. In terms of biological role, endonuclease that specifically degrades the RNA of RNA-DNA hybrids. This is Ribonuclease HII from Xylella fastidiosa (strain M23).